Here is a 338-residue protein sequence, read N- to C-terminus: MIDFKAVIAKVATGASLTRDEAANAFDAMMSGDATPSQMGALLMGLRVRGETVDEITGAVTTMRAKMLTVAAPPDAVDVVGTGGDGSGSVNVSTCTSFVVAGCGVPVAKHGNRALSSKSGAADVLNALGVKIDITPDHVGRCVAEAGIGFMFAPTHHPAMKNVGPTRVELATRTIFNLLGPLSNPAGVKRQMIGVFSRQWVQPLAQVLQNLGSESIWVVHGSDGLDEITLSGPTAVAELKNGEIRTFEIGPEDAGLPRAPADALKGGDAEANAVALRAVLEGMPGPYRDVALLNAAATLIVAGKAKDLKEGVALGAQSIDSGAAEARLKKLIAVSAAA.

5-phospho-alpha-D-ribose 1-diphosphate contacts are provided by residues glycine 81, 84–85 (GD), serine 89, 91–94 (NVST), 109–117 (KHGNRALSS), and alanine 121. An anthranilate-binding site is contributed by glycine 81. Serine 93 is a Mg(2+) binding site. Position 112 (asparagine 112) interacts with anthranilate. Position 167 (arginine 167) interacts with anthranilate. The Mg(2+) site is built by aspartate 226 and glutamate 227.

It belongs to the anthranilate phosphoribosyltransferase family. In terms of assembly, homodimer. Requires Mg(2+) as cofactor.

It carries out the reaction N-(5-phospho-beta-D-ribosyl)anthranilate + diphosphate = 5-phospho-alpha-D-ribose 1-diphosphate + anthranilate. Its pathway is amino-acid biosynthesis; L-tryptophan biosynthesis; L-tryptophan from chorismate: step 2/5. Functionally, catalyzes the transfer of the phosphoribosyl group of 5-phosphorylribose-1-pyrophosphate (PRPP) to anthranilate to yield N-(5'-phosphoribosyl)-anthranilate (PRA). In Rhodopseudomonas palustris (strain HaA2), this protein is Anthranilate phosphoribosyltransferase.